A 473-amino-acid chain; its full sequence is Maltose fermentation regulatory protein MAL63 (473 aa).

The segment at residues Cys8–Cys34 is a DNA-binding region (zn(2)-C6 fungal-type). The short motif at Lys41–Arg49 is the Nuclear localization signal element.

Belongs to the MAL13 family.

It is found in the nucleus. In terms of biological role, regulates the coordinate transcription of structural MAL6S (maltase) and MAL6T (maltose permease) genes. This chain is Maltose fermentation regulatory protein MAL63 (MAL63), found in Saccharomyces cerevisiae (Baker's yeast).